The sequence spans 626 residues: Probable potassium transport system protein Kup (626 aa).

12 consecutive transmembrane segments (helical) span residues 11 to 31, 55 to 75, 103 to 123, 140 to 160, 171 to 191, 216 to 236, 250 to 270, 282 to 302, 340 to 360, 369 to 389, 395 to 415, and 422 to 442; these read FLTLSAGALGVVYGDIGTSPL, LSLIFWALFIIVAVKYVVFVM, AWIISLGLFGTALFYGDGMIT, AALSHYVVPASILILLALFLI, LFGPIMLLWFLSIGTLGFVSL, LGFAALGAVVLAVTGAEALYA, WFAVVFPSLILNYLGQGALLI, LLVPEWALYPMIGLATAATVI, IYAPAVNRLLLISVLALVLAF, AYGLAVVGTMVVTTLLALVVA, WPGLALLVTGAVLLSVDLSFL, and LGDGGWIPLSLGLILATVMST.

Belongs to the HAK/KUP transporter (TC 2.A.72) family.

The protein localises to the cell inner membrane. The enzyme catalyses K(+)(in) + H(+)(in) = K(+)(out) + H(+)(out). Transport of potassium into the cell. Likely operates as a K(+):H(+) symporter. The polypeptide is Probable potassium transport system protein Kup (Methylococcus capsulatus (strain ATCC 33009 / NCIMB 11132 / Bath)).